Reading from the N-terminus, the 74-residue chain is U-actitoxin-Bgr3a (74 aa).

The signal sequence occupies residues 1-21 (MSAQRFLFLLVVTSLIAASLA). The propeptide occupies 22-29 (APKDVQLT). Disulfide bonds link Cys35-Cys68, Cys37-Cys61, and Cys51-Cys69.

The protein belongs to the sea anemone type 3 (BDS) potassium channel toxin family.

The protein resides in the secreted. Its subcellular location is the nematocyst. Potently and selectively inhibits voltage-gated potassium channels Kv11/KCNH/ERG. Acts as a gating-modifier toxin that shifts the voltage-dependence of ERG activation in the positive direction and suppresses its current amplitudes elicited by strong depolarizing pulses that maximally activate the channels. In Bunodosoma granuliferum (Red warty sea anemone), this protein is U-actitoxin-Bgr3a.